A 1270-amino-acid chain; its full sequence is DNA-directed RNA polymerase subunit beta (1270 aa).

It belongs to the RNA polymerase beta chain family. The RNAP catalytic core consists of 2 alpha, 1 beta, 1 beta' and 1 omega subunit. When a sigma factor is associated with the core the holoenzyme is formed, which can initiate transcription.

It catalyses the reaction RNA(n) + a ribonucleoside 5'-triphosphate = RNA(n+1) + diphosphate. Functionally, DNA-dependent RNA polymerase catalyzes the transcription of DNA into RNA using the four ribonucleoside triphosphates as substrates. In Phocaeicola vulgatus (strain ATCC 8482 / DSM 1447 / JCM 5826 / CCUG 4940 / NBRC 14291 / NCTC 11154) (Bacteroides vulgatus), this protein is DNA-directed RNA polymerase subunit beta.